Reading from the N-terminus, the 362-residue chain is Histidinol-phosphate aminotransferase (362 aa).

At Lys-222 the chain carries N6-(pyridoxal phosphate)lysine.

This sequence belongs to the class-II pyridoxal-phosphate-dependent aminotransferase family. Histidinol-phosphate aminotransferase subfamily. As to quaternary structure, homodimer. Pyridoxal 5'-phosphate serves as cofactor.

The enzyme catalyses L-histidinol phosphate + 2-oxoglutarate = 3-(imidazol-4-yl)-2-oxopropyl phosphate + L-glutamate. It functions in the pathway amino-acid biosynthesis; L-histidine biosynthesis; L-histidine from 5-phospho-alpha-D-ribose 1-diphosphate: step 7/9. The sequence is that of Histidinol-phosphate aminotransferase from Shewanella amazonensis (strain ATCC BAA-1098 / SB2B).